A 205-amino-acid polypeptide reads, in one-letter code: Small ribosomal subunit protein uS4 (205 aa).

Residues 1-16 (MSKRESSKYKIDRRMG) are compositionally biased toward basic and acidic residues. The segment at 1–46 (MSKRESSKYKIDRRMGENIWGRPKSPVNRREYGPGQHGQRRKGKLS) is disordered. Residues 94-157 (SRLDAIVYRA…KQLVIVLEAV (64 aa)) enclose the S4 RNA-binding domain.

It belongs to the universal ribosomal protein uS4 family. As to quaternary structure, part of the 30S ribosomal subunit. Contacts protein S5. The interaction surface between S4 and S5 is involved in control of translational fidelity.

Functionally, one of the primary rRNA binding proteins, it binds directly to 16S rRNA where it nucleates assembly of the body of the 30S subunit. In terms of biological role, with S5 and S12 plays an important role in translational accuracy. This is Small ribosomal subunit protein uS4 from Rhizobium leguminosarum bv. trifolii (strain WSM2304).